The chain runs to 754 residues: Leucine-rich repeat-containing protein 36 (754 aa).

LRR repeat units lie at residues 51–72 (NLRS…QYLC) and 73–94 (SLQD…SRLQ). Residues 107–146 (NPVVRKDTDYRLFAVYTLQTLEKLDDRTVREGERKAAKLH) enclose the LRRCT domain. The span at 241-255 (REMPSDNHQEDEFRH) shows a compositional bias: basic and acidic residues. A disordered region spans residues 241–270 (REMPSDNHQEDEFRHYSPRQSTVRSPEKMT). Residues 600–680 (NDMESLKQKL…EKTVAILHES (81 aa)) are a coiled coil. Residues 702–734 (YSGKALLPPEKGHHLGRSSPFGKSTLSSSSPVA) are disordered. Positions 722 to 732 (FGKSTLSSSSP) are enriched in polar residues.

This chain is Leucine-rich repeat-containing protein 36 (LRRC36), found in Homo sapiens (Human).